The chain runs to 221 residues: MNNNNNNNNNNNNNNNNNNNNNNNNNNEEIKFNLNINEEKDDEIKDLYKVIESLKKELFEKYKENLLLKENLDQEIEFNKVLKFGMFEKNKEFEILATQLGILKSKYGNKKCDIEVIIISSDDEDDDNKNKNQLKDITTTTTSSTTTTTTTTSTTTTNNSSSENNFDDQNKEEVVFCKPYNQSDNDEDSKNNSKDLGYNENNIGGDATVGEYNSYVVKKEM.

Low complexity-rich tracts occupy residues 1-27 (MNNNNNNNNNNNNNNNNNNNNNNNNNN) and 140-162 (TTTSSTTTTTTTTSTTTTNNSSS). 2 disordered regions span residues 1–28 (MNNNNNNNNNNNNNNNNNNNNNNNNNNE) and 140–205 (TTTS…NIGG).

This is an uncharacterized protein from Dictyostelium discoideum (Social amoeba).